A 134-amino-acid polypeptide reads, in one-letter code: Endoribonuclease YbeY (134 aa).

Residues H94, H98, and H104 each coordinate Zn(2+).

It belongs to the endoribonuclease YbeY family. Requires Zn(2+) as cofactor.

It is found in the cytoplasm. In terms of biological role, single strand-specific metallo-endoribonuclease involved in late-stage 70S ribosome quality control and in maturation of the 3' terminus of the 16S rRNA. The sequence is that of Endoribonuclease YbeY from Campylobacter jejuni subsp. jejuni serotype O:23/36 (strain 81-176).